Consider the following 97-residue polypeptide: Citrate lyase acyl carrier protein (97 aa).

Position 14 is an O-(phosphoribosyl dephospho-coenzyme A)serine (Ser-14).

The protein belongs to the CitD family. In terms of assembly, oligomer with a subunit composition of (alpha,beta,gamma)6.

Its subcellular location is the cytoplasm. In terms of biological role, covalent carrier of the coenzyme of citrate lyase. This chain is Citrate lyase acyl carrier protein, found in Enterobacter sp. (strain 638).